Reading from the N-terminus, the 311-residue chain is MASYLDFEKNIQQIDEDLANAKIKGDDEAVKILEKNLEKETQKVYKNLSDYQRLQLARHPDRPYALDYIQAILSDAYEIHGDRAFRDDPAIVCYAGYIGGKKIIVIGEQKGRGTKDKLHRNFGMPHPEGYRKALRVAKMAEKFNIPVLFLVDTPGAYPGVGAEERGQSEAIARNLYELSALKTITIAVVIGEGGSGGALAIGVADKLAMMKNSVFSVISPEGCAAILWNDPSKSEAATKAMKVTADDLKTQGLIDDVIEEPMSGAHRDKENAIKNLSDYVLKAIEELEQYDKRELAALRMQKIFKFGAFAE.

Residues 36 to 286 (NLEKETQKVY…SDYVLKAIEE (251 aa)) enclose the CoA carboxyltransferase C-terminal domain.

This sequence belongs to the AccA family. In terms of assembly, acetyl-CoA carboxylase is a heterohexamer composed of biotin carboxyl carrier protein (AccB), biotin carboxylase (AccC) and two subunits each of ACCase subunit alpha (AccA) and ACCase subunit beta (AccD).

Its subcellular location is the cytoplasm. The enzyme catalyses N(6)-carboxybiotinyl-L-lysyl-[protein] + acetyl-CoA = N(6)-biotinyl-L-lysyl-[protein] + malonyl-CoA. It participates in lipid metabolism; malonyl-CoA biosynthesis; malonyl-CoA from acetyl-CoA: step 1/1. Component of the acetyl coenzyme A carboxylase (ACC) complex. First, biotin carboxylase catalyzes the carboxylation of biotin on its carrier protein (BCCP) and then the CO(2) group is transferred by the carboxyltransferase to acetyl-CoA to form malonyl-CoA. The polypeptide is Acetyl-coenzyme A carboxylase carboxyl transferase subunit alpha (Campylobacter lari (strain RM2100 / D67 / ATCC BAA-1060)).